The sequence spans 1420 residues: MSARDFVEGEAVLDDEENENEEEQEEDYDGEVHEGAGTMNHYNDSSEEEEEDDDDEEAARAIREGFIVDEDEEIEERAERRREKRKRRREEREREDEHLDEEDLELIGELNPAFQSAAATESKFKRLKRGHKDHRQASQGIDDIFNSDEDEEAAGDYGRPSHRRPMHDEMKDFIEEDVFTDDELEREREDLEIARPAKRGVTGLGATDAAGLDENALEDMRAAFGDGNEYLFALEMEEQEEEQEEDQEKHLDLKDVFEPSQLAERMLTEEDNQIRLLDEPERHQLARKPYRNLVLTEEQFREEAAWIANLMLLKKRIEPELREPFQRSVAKVLEFLVTDDWEVPFIFQHRKDYMIHATKVPVAGAPADGDTSQYTIKAEKLLNMTDLWDIFDHDLKFRALVEKRNTIQKTYDNLQSLFNVNDSVVQDMLSTAVTMEELQDVQDYVHFQYASQLRDINLMNGEANGDTHRRKATGRSFFERVRNGKAYGLVRAFGITADAFAQNALKEGRRQYTEDPAERPEEMADSFIDNDFSNASHVLKAAKALFAEEIVMSPKMRKVIRQAYYMNGAVDCFRTEKGLRRIDEQHPYYEFKYLRNQQLSDIARQPELYLRMLKAEEEGLVEVKVRFENFDHFRQRLYPDIESDNYSEIADAWNRTRREVLDMALGKLERLINRSVKENIRQECENHVAKECREAFSQRLDQAPYKPKGMVLGTVPRVLAMSTGTGIVGRDPIHWAYVEEDGRVLENGKFVDLSIGDRDRSIPDGKDVEALIELLERRRPDVIGVSGMSPETRKLYKLLTELVEKKDLRGATYTDERDEEISDPLEVVIVNDEVARLYQHSERAKKDHPSFGPLTHYCVALAKYLQSPLKEYASLGRDIVSIQFKRGQQLVAQELLLKQLETALVDMVNLVGVDINEAVTDPATANLLPYVCGLGPRKAAHLLKIVNMNGGVVNNRVELLGVNAQYPAMGVKVWNNCASFLFIDFENADPDADPLDNTRVHPEDYDIARKMAADALELDEEDIKAETDENGPGAIVRKLFRDEAQDRVNDLILEEYAEQLEKNLNQRKRATLETIRAELQQPYEELRKQFALLSTDDVFTMLTGETSDTLAEGMVVPISIKRITDDHIDGKLDCGVDVLVPESELTDRYDIPVRALYSLHQTLPAKVLFLNKKNFLCNVSLREEQVSRPTPRPRDHMRGEWDDRQEAKDREMLQEKTQSGGRVMRVIKHPLFRPFNSTQAEEFLGSQSRGDVVIRPSSKGPDHLAVTWKVADGIFQHIDVLELDKENEFSVGRTLKVGGRYTYSDLDDLIFNHVKAMAKKVDEMMLHEKYQEGSKDATYSWLNTYTKANPRRSAYAFCIDPKHPGYFQLCFKAGENAQLHSWPVKVIPQGYELQRNPYPDMRALCNGFKLLFTNMQAGKR.

Disordered stretches follow at residues 1-104 (MSAR…EEDL), 117-167 (AAAT…RPMH), and 1186-1208 (VSRP…QEAK). Acidic residues-rich tracts occupy residues 11–29 (AVLD…EDYD), 45–57 (SSEE…DDEE), and 67–76 (IVDEDEEIEE). A compositionally biased stretch (basic residues) spans 125-134 (KRLKRGHKDH). The segment covering 145–154 (FNSDEDEEAA) has biased composition (acidic residues). The SH2 domain maps to 1230–1330 (PLFRPFNSTQ…VDEMMLHEKY (101 aa)).

The protein belongs to the SPT6 family.

It is found in the nucleus. It localises to the chromosome. In terms of biological role, histone H3-H4 chaperone that plays a role in maintenance of chromatin structure during RNA polymerase II transcription elongation thereby repressing transcription initiation from cryptic promoters. Mediates the reassembly of nucleosomes onto the promoters of at least a selected set of genes during repression; the nucleosome reassembly is essential for transcriptional repression. Essential for viability. The sequence is that of Transcription elongation factor spt6 (spt6) from Aspergillus fumigatus (strain ATCC MYA-4609 / CBS 101355 / FGSC A1100 / Af293) (Neosartorya fumigata).